Reading from the N-terminus, the 275-residue chain is Hydroxyethylthiazole kinase (275 aa).

Met50 contributes to the substrate binding site. Residues Arg126 and Ser171 each contribute to the ATP site. Ala200 contacts substrate.

Belongs to the Thz kinase family. It depends on Mg(2+) as a cofactor.

It catalyses the reaction 5-(2-hydroxyethyl)-4-methylthiazole + ATP = 4-methyl-5-(2-phosphooxyethyl)-thiazole + ADP + H(+). The protein operates within cofactor biosynthesis; thiamine diphosphate biosynthesis; 4-methyl-5-(2-phosphoethyl)-thiazole from 5-(2-hydroxyethyl)-4-methylthiazole: step 1/1. Catalyzes the phosphorylation of the hydroxyl group of 4-methyl-5-beta-hydroxyethylthiazole (THZ). The sequence is that of Hydroxyethylthiazole kinase from Acinetobacter baumannii (strain AB307-0294).